A 217-amino-acid chain; its full sequence is Large ribosomal subunit protein uL1 (217 aa).

Belongs to the universal ribosomal protein uL1 family. In terms of assembly, component of the large ribosomal subunit.

Its subcellular location is the cytoplasm. In terms of biological role, component of the large ribosomal subunit. The ribosome is a large ribonucleoprotein complex responsible for the synthesis of proteins in the cell. The sequence is that of Large ribosomal subunit protein uL1 (rpl10a) from Xenopus laevis (African clawed frog).